The chain runs to 126 residues: Aspartate 1-decarboxylase (126 aa).

S25 serves as the catalytic Schiff-base intermediate with substrate; via pyruvic acid. S25 is modified (pyruvic acid (Ser)). T57 is a binding site for substrate. Residue Y58 is the Proton donor of the active site. 73 to 75 contacts substrate; the sequence is GAA.

The protein belongs to the PanD family. As to quaternary structure, heterooctamer of four alpha and four beta subunits. Pyruvate is required as a cofactor. Is synthesized initially as an inactive proenzyme, which is activated by self-cleavage at a specific serine bond to produce a beta-subunit with a hydroxyl group at its C-terminus and an alpha-subunit with a pyruvoyl group at its N-terminus.

It is found in the cytoplasm. The catalysed reaction is L-aspartate + H(+) = beta-alanine + CO2. It functions in the pathway cofactor biosynthesis; (R)-pantothenate biosynthesis; beta-alanine from L-aspartate: step 1/1. Catalyzes the pyruvoyl-dependent decarboxylation of aspartate to produce beta-alanine. In Pseudomonas fluorescens, this protein is Aspartate 1-decarboxylase.